Reading from the N-terminus, the 394-residue chain is Elongation factor Tu 1 (394 aa).

Positions 10-204 constitute a tr-type G domain; sequence KPHVNVGTIG…HLDTYIPEPE (195 aa). A G1 region spans residues 19–26; the sequence is GHVDHGKT. 19-26 lines the GTP pocket; it reads GHVDHGKT. Thr-26 contributes to the Mg(2+) binding site. Residues 60-64 form a G2 region; the sequence is GITIN. The interval 81-84 is G3; that stretch reads DCPG. GTP-binding positions include 81–85 and 136–139; these read DCPGH and NKCD. The interval 136 to 139 is G4; it reads NKCD. The interval 174 to 176 is G5; that stretch reads SAL.

It belongs to the TRAFAC class translation factor GTPase superfamily. Classic translation factor GTPase family. EF-Tu/EF-1A subfamily. In terms of assembly, monomer.

It is found in the cytoplasm. It catalyses the reaction GTP + H2O = GDP + phosphate + H(+). GTP hydrolase that promotes the GTP-dependent binding of aminoacyl-tRNA to the A-site of ribosomes during protein biosynthesis. The chain is Elongation factor Tu 1 from Haemophilus influenzae (strain 86-028NP).